Consider the following 508-residue polypeptide: ATP synthase subunit alpha (508 aa).

171 to 178 contributes to the ATP binding site; it reads GDRQTGKT.

This sequence belongs to the ATPase alpha/beta chains family. In terms of assembly, F-type ATPases have 2 components, CF(1) - the catalytic core - and CF(0) - the membrane proton channel. CF(1) has five subunits: alpha(3), beta(3), gamma(1), delta(1), epsilon(1). CF(0) has three main subunits: a(1), b(2) and c(9-12). The alpha and beta chains form an alternating ring which encloses part of the gamma chain. CF(1) is attached to CF(0) by a central stalk formed by the gamma and epsilon chains, while a peripheral stalk is formed by the delta and b chains.

It is found in the cell membrane. The catalysed reaction is ATP + H2O + 4 H(+)(in) = ADP + phosphate + 5 H(+)(out). Its function is as follows. Produces ATP from ADP in the presence of a proton gradient across the membrane. The alpha chain is a regulatory subunit. The sequence is that of ATP synthase subunit alpha from Protochlamydia amoebophila (strain UWE25).